A 307-amino-acid polypeptide reads, in one-letter code: Histone deacetylase HDT1 (307 aa).

The span at 98–112 shows a compositional bias: acidic residues; it reads EDEMDLDSEDEDEEL. Residues 98–280 are disordered; that stretch reads EDEMDLDSED…KSGGSVPCKP (183 aa). Basic and acidic residues predominate over residues 119–132; that stretch reads ENGKADEKKQKSQE. Residues 151 to 197 show a composition bias toward acidic residues; sequence DDDSDEDETDDSDEDETDDSDEGLSSEEGDDDSSDEDDTSDDEEEDT. Basic and acidic residues predominate over residues 198–211; it reads PTPKKPEVGKKRPA. Residues 265-277 are compositionally biased toward low complexity; it reads SPKSAPKSGGSVP. The segment at 276-299 adopts a C2H2-type; degenerate zinc-finger fold; the sequence is VPCKPCSKSFISETALQAHSRAKM.

This sequence belongs to the histone deacetylase HD2 family. As to quaternary structure, multimer. Isolated as a trimer composed of 3 proteins of 39, 42 and 45 kDa, possibly a homotrimer with different phosphorylation status or a heterotrimer with HDT2 and/or HDT3. Post-translationally, the N-terminus is blocked. Phosphorylated. Required for enzyme activity.

Its subcellular location is the nucleus. It is found in the nucleolus. With respect to regulation, inhibited by 3-(4-Aroyl-1-methyl-1H-pyrrol-2-yl)-N-hydroxy-2-propenamides. 3-(1-methyl-4-phenylacetyl-1H-pyrrol-2-yl)-N-hydroxy-2-propenamide 1b and 3-[1-methyl-4-(3-phenyl-2-propenoyl)-1H-pyrrol-2-yl]-N-hydroxy-2-propenamide 1c are very potent inhibitors. Functionally, mediates the deacetylation of lysine residues on the N-terminal part of the core histones (H2A, H2B, H3 and H4). Histone deacetylation gives a tag for epigenetic repression and plays an important role in transcriptional regulation, cell cycle progression and developmental events. Able to deacetylate all 4 core histones. The chain is Histone deacetylase HDT1 (HDT1) from Zea mays (Maize).